The following is a 421-amino-acid chain: Serine hydroxymethyltransferase (421 aa).

Residues L121 and 125-127 (GHL) contribute to the (6S)-5,6,7,8-tetrahydrofolate site. K229 carries the N6-(pyridoxal phosphate)lysine modification.

Belongs to the SHMT family. In terms of assembly, homodimer. It depends on pyridoxal 5'-phosphate as a cofactor.

The protein resides in the cytoplasm. It catalyses the reaction (6R)-5,10-methylene-5,6,7,8-tetrahydrofolate + glycine + H2O = (6S)-5,6,7,8-tetrahydrofolate + L-serine. It functions in the pathway one-carbon metabolism; tetrahydrofolate interconversion. Its pathway is amino-acid biosynthesis; glycine biosynthesis; glycine from L-serine: step 1/1. Catalyzes the reversible interconversion of serine and glycine with tetrahydrofolate (THF) serving as the one-carbon carrier. This reaction serves as the major source of one-carbon groups required for the biosynthesis of purines, thymidylate, methionine, and other important biomolecules. Also exhibits THF-independent aldolase activity toward beta-hydroxyamino acids, producing glycine and aldehydes, via a retro-aldol mechanism. This chain is Serine hydroxymethyltransferase, found in Haemophilus influenzae (strain ATCC 51907 / DSM 11121 / KW20 / Rd).